The primary structure comprises 502 residues: MSCPVPACCALLLVLGLCRARPRNALLLLADDGGFESGAYNNSAIATPHLDALARRSLLFRNAFTSVSSCSPSRASLLTGLPQHQNGMYGLHQDVHHFNSFDKVRSLPLLLSQAGVRTGIIGKKHVGPETVYPFDFAYTEENGSVLQVGRNITRIKLLVRKFLQTQDDRPFFLYVAFHDPHRCGHSQPQYGTFCEKFGNGESGMGRIPDWTPQAYDPLDVLVPYFVPNTPAARADLAAQYTTVGRMDQGVGLVLQELRDAGVLNDTLVIFTSDNGIPFPSGRTNLYWPGTAEPLLVSSPEHPKRWGQVSEAYVSLLDLTPTILDWFSIPYPSYAIFGSKTIHLTGRSLLPALEAEPLWATVFGSQSHHEVTMSYPMRSVQHRHFRLVHNLNFKMPFPIDQDFYVSPTFQDLLNRTTAGQPTGWYKDLRHYYYRARWELYDRSRDPHETQNLATDPRFAQLLEMLRDQLAKWQWETHDPWVCAPDGVLEEKLSPQCQPLHNEL.

Positions 1–20 (MSCPVPACCALLLVLGLCRA) are cleaved as a signal peptide. Positions 31 and 32 each coordinate Ca(2+). Asn41 is a glycosylation site (N-linked (GlcNAc...) asparagine). Cys70 is a binding site for Ca(2+). Residue Cys70 is the Nucleophile of the active site. Cys70 is subject to 3-oxoalanine (Cys). 2 N-linked (GlcNAc...) asparagine glycosylation sites follow: Asn142 and Asn151. A disulfide bond links Cys183 and Cys194. Asn264 carries an N-linked (GlcNAc...) asparagine glycan. 2 residues coordinate Ca(2+): Asp273 and Asn274. A glycan (N-linked (GlcNAc...) asparagine) is linked at Asn413. Cys481 and Cys495 are disulfide-bonded.

This sequence belongs to the sulfatase family. The cofactor is Ca(2+). Post-translationally, the conversion to 3-oxoalanine (also known as C-formylglycine, FGly), of a serine or cysteine residue in prokaryotes and of a cysteine residue in eukaryotes, is critical for catalytic activity.

It is found in the lysosome. It catalyses the reaction N-sulfo-D-glucosamine + H2O = D-glucosamine + sulfate. Catalyzes a step in lysosomal heparan sulfate degradation. In Homo sapiens (Human), this protein is N-sulphoglucosamine sulphohydrolase (SGSH).